The primary structure comprises 101 residues: NADH-quinone oxidoreductase subunit K (101 aa).

Helical transmembrane passes span L4–I24, I29–A49, and F65–F85.

Belongs to the complex I subunit 4L family. As to quaternary structure, NDH-1 is composed of 14 different subunits. Subunits NuoA, H, J, K, L, M, N constitute the membrane sector of the complex.

Its subcellular location is the cell inner membrane. It catalyses the reaction a quinone + NADH + 5 H(+)(in) = a quinol + NAD(+) + 4 H(+)(out). NDH-1 shuttles electrons from NADH, via FMN and iron-sulfur (Fe-S) centers, to quinones in the respiratory chain. The immediate electron acceptor for the enzyme in this species is believed to be ubiquinone. Couples the redox reaction to proton translocation (for every two electrons transferred, four hydrogen ions are translocated across the cytoplasmic membrane), and thus conserves the redox energy in a proton gradient. The polypeptide is NADH-quinone oxidoreductase subunit K (Methylobacterium nodulans (strain LMG 21967 / CNCM I-2342 / ORS 2060)).